A 70-amino-acid polypeptide reads, in one-letter code: Small ribosomal subunit protein bS21A (70 aa).

This sequence belongs to the bacterial ribosomal protein bS21 family.

This Burkholderia orbicola (strain AU 1054) protein is Small ribosomal subunit protein bS21A.